Here is a 456-residue protein sequence, read N- to C-terminus: MRSSWIKPRLGKNNVTQMNFARNGYLTEEMDFVAKKENLPSSLIMEEVARGRLIIPANINHLNLEPMSIGIASRCKVNANIGASPNASDINEEVEKLKLAVKYGADTVMDLSTGGVNLDEVRQAIIQESPVPIGTVPVYQALESVHGSIDRLTEDDFLHIIEKHCQQGVDYQTIHAGLLIEHLPKVKGRITGIVSRGGGILAQWMLHHFKQNPLYTRFDDICEIFKKYDCTFSLGDSLRPGCLHDASDDAQLAELKTLGELTRRAWEHNVQVMVEGPGHVPMDQIEFNVRKQMEECSEAPFYVLGPLVTDISPGYDHISSAIGAAMAGWYGTSMLCYVTPKEHLGLPNAEDVREGLIAYKIAAHAADIARHRAGARDRDDELSYARYNFDWNKQFELSLDPERAKQYHDETLPEEIFKKAEFCSMCGPKHCPMNSKISDESLDQLKDKLEECNTSA.

Residues N80, M109, Y139, H175, 195-197 (SRG), 236-239 (DSLR), and E275 each bind substrate. Residue H279 participates in Zn(2+) binding. Y302 is a substrate binding site. H343 is a binding site for Zn(2+). 3 residues coordinate [4Fe-4S] cluster: C423, C426, and C431.

The protein belongs to the ThiC family. It depends on [4Fe-4S] cluster as a cofactor.

The enzyme catalyses 5-amino-1-(5-phospho-beta-D-ribosyl)imidazole + S-adenosyl-L-methionine = 4-amino-2-methyl-5-(phosphooxymethyl)pyrimidine + CO + 5'-deoxyadenosine + formate + L-methionine + 3 H(+). Its pathway is cofactor biosynthesis; thiamine diphosphate biosynthesis. In terms of biological role, catalyzes the synthesis of the hydroxymethylpyrimidine phosphate (HMP-P) moiety of thiamine from aminoimidazole ribotide (AIR) in a radical S-adenosyl-L-methionine (SAM)-dependent reaction. In Prochlorococcus marinus (strain MIT 9215), this protein is Phosphomethylpyrimidine synthase.